The primary structure comprises 207 residues: Glycerol-3-phosphate acyltransferase (207 aa).

Helical transmembrane passes span 2 to 22, 47 to 67, 72 to 92, 121 to 141, and 155 to 175; these read ILVL…GVVI, MLGP…GTLA, ILFG…AVFG, FFVI…MVSV, and LVYH…VFLI.

Belongs to the PlsY family. As to quaternary structure, probably interacts with PlsX.

Its subcellular location is the cell membrane. It catalyses the reaction an acyl phosphate + sn-glycerol 3-phosphate = a 1-acyl-sn-glycero-3-phosphate + phosphate. Its pathway is lipid metabolism; phospholipid metabolism. In terms of biological role, catalyzes the transfer of an acyl group from acyl-phosphate (acyl-PO(4)) to glycerol-3-phosphate (G3P) to form lysophosphatidic acid (LPA). This enzyme utilizes acyl-phosphate as fatty acyl donor, but not acyl-CoA or acyl-ACP. In Lacticaseibacillus casei (strain BL23) (Lactobacillus casei), this protein is Glycerol-3-phosphate acyltransferase.